The following is a 582-amino-acid chain: Kelch-like protein diablo (582 aa).

The segment at 1 to 22 (MGDVLISDRPPSPARLSHTSEK) is disordered. The 68-residue stretch at 41-108 (CDVVINVSGR…CYTSHIVVEE (68 aa)) folds into the BTB domain. The 103-residue stretch at 143–245 (CLGIRAFADT…SPKFLVGTVG (103 aa)) folds into the BACK domain. 6 Kelch repeats span residues 292 to 338 (VLFA…VLND), 340 to 386 (LYAV…VLDG), 387 to 433 (FLYA…VLGG), 435 to 480 (LYAI…VFNN), 482 to 527 (IYAV…VVNG), and 528 to 574 (QLYA…VMRA).

The protein operates within protein modification; protein ubiquitination. Probable substrate-specific adapter of an E3 ubiquitin-protein ligase complex which mediates the ubiquitination and subsequent proteasomal degradation of target proteins. May have a role in synapse differentiation and growth. The polypeptide is Kelch-like protein diablo (Culex quinquefasciatus (Southern house mosquito)).